The chain runs to 304 residues: Type II methyltransferase M.ScaI (304 aa).

This sequence belongs to the N(4)/N(6)-methyltransferase family. N(4) subfamily.

The enzyme catalyses a 2'-deoxycytidine in DNA + S-adenosyl-L-methionine = an N(4)-methyl-2'-deoxycytidine in DNA + S-adenosyl-L-homocysteine + H(+). Functionally, a methylase that recognizes the double-stranded sequence 5'-AGTACT-3', methylates C-5 on both strands, and protects the DNA from cleavage by the ScaI endonuclease. The polypeptide is Type II methyltransferase M.ScaI (Streptomyces caespitosus).